The sequence spans 517 residues: U3 small nucleolar RNA-associated protein 15 homolog (517 aa).

7 WD repeats span residues 36–75, 78–117, 120–159, 162–202, 204–242, 246–285, and 287–324; these read KEFG…PIRN, RFHD…SLRQ, GHSK…ELSS, EHTD…SVMT, QHGQ…QQLV, NHHK…HNFD, and ASSI…EKEA.

As to quaternary structure, part of the small subunit (SSU) processome, composed of more than 70 proteins and the RNA chaperone small nucleolar RNA (snoRNA) U3. May be a component of the proposed t-UTP subcomplex of the ribosomal small subunit (SSU) processome.

The protein resides in the nucleus. It localises to the nucleolus. In terms of biological role, ribosome biogenesis factor. Involved in nucleolar processing of pre-18S ribosomal RNA. Required for optimal pre-ribosomal RNA transcription by RNA polymerase I. Part of the small subunit (SSU) processome, first precursor of the small eukaryotic ribosomal subunit. During the assembly of the SSU processome in the nucleolus, many ribosome biogenesis factors, an RNA chaperone and ribosomal proteins associate with the nascent pre-rRNA and work in concert to generate RNA folding, modifications, rearrangements and cleavage as well as targeted degradation of pre-ribosomal RNA by the RNA exosome. The protein is U3 small nucleolar RNA-associated protein 15 homolog (utp15) of Danio rerio (Zebrafish).